The primary structure comprises 850 residues: Vacuolar membrane protease (850 aa).

Over 1-20 (MASSRAQWFNPIAFTPWPVT) the chain is Cytoplasmic. The helical transmembrane segment at 21-41 (CITTIVYLALLIPILVINLVV) threads the bilayer. At 42 to 282 (PSAPETNPKG…DGKSKDQNKV (241 aa)) the chain is on the vacuolar side. Residues Asn53, Asn116, and Asn119 are each glycosylated (N-linked (GlcNAc...) asparagine). Zn(2+)-binding residues include His175 and Asp187. Catalysis depends on Glu221, which acts as the Proton acceptor. Glu222 contacts Zn(2+). The helical transmembrane segment at 283–303 (NSGTGTLGVWFDMFGTAFAVF) threads the bilayer. Over 304–308 (RLHTL) the chain is Cytoplasmic. A helical membrane pass occupies residues 309–329 (FAISVALLVIAPLVIFVTSVI). The Vacuolar segment spans residues 330 to 363 (LSKTDRMYLFSMSKSLEGTGDQVSLRGLRGFSRT). Residues 364-384 (PIILVIATTIPICLAYLLEKV) traverse the membrane as a helical segment. Residues 385 to 393 (NPYIVHSSQ) lie on the Cytoplasmic side of the membrane. The helical transmembrane segment at 394–414 (FSVWSMMFSAWIFLAWFLACA) threads the bilayer. Over 415–425 (ADFFRPSALHR) the chain is Vacuolar. A helical membrane pass occupies residues 426 to 446 (AYSYTWIFIATWIMLVINTVY). Residues 447 to 529 (ANQKGIAAGP…TLPRWTWVLQ (83 aa)) lie on the Cytoplasmic side of the membrane. The helical transmembrane segment at 530 to 550 (LLLLAPIVLILVGQLALFLTA) threads the bilayer. Over 551–563 (SMCQVGSDGVSTF) the chain is Vacuolar. A helical membrane pass occupies residues 564 to 584 (VVYLACSVFTTLLCIPLFPLI). The Cytoplasmic segment spans residues 585 to 590 (HRFTYH). The chain crosses the membrane as a helical span at residues 591–611 (IPTFLFLVFIGTLIYNLVAFP). Topologically, residues 612-850 (FSPANRLKTF…VEASHSFTIQ (239 aa)) are vacuolar. N-linked (GlcNAc...) asparagine glycans are attached at residues Asn630, Asn658, and Asn702.

This sequence belongs to the peptidase M28 family. The cofactor is Zn(2+).

It is found in the vacuole membrane. May be involved in vacuolar sorting and osmoregulation. The polypeptide is Vacuolar membrane protease (Ajellomyces capsulatus (strain NAm1 / WU24) (Darling's disease fungus)).